We begin with the raw amino-acid sequence, 212 residues long: GrpE protein homolog, mitochondrial (212 aa).

The protein belongs to the GrpE family. As to quaternary structure, component of the PAM complex, at least composed of mtHsp70, MGE1, TIM44, PAM16, PAM17 and PAM18.

Its subcellular location is the mitochondrion matrix. Essential component of the PAM complex, a complex required for the translocation of transit peptide-containing proteins from the inner membrane into the mitochondrial matrix in an ATP-dependent manner. Seems to control the nucleotide-dependent binding of SSC1 to substrate proteins. This is GrpE protein homolog, mitochondrial (mge1) from Eremothecium gossypii (strain ATCC 10895 / CBS 109.51 / FGSC 9923 / NRRL Y-1056) (Yeast).